The following is a 394-amino-acid chain: D-aspartate oxidase (394 aa).

FAD contacts are provided by isoleucine 19, alanine 57, serine 58, and glycine 62. A helical transmembrane segment spans residues 190-210 (LIGHEPTAGVIVCVGLGALVL). The N-linked (GlcNAc...) asparagine glycan is linked to asparagine 214. FAD-binding residues include arginine 342, glycine 373, and glutamine 375.

The protein belongs to the DAMOX/DASOX family. It depends on FAD as a cofactor.

The protein localises to the membrane. It catalyses the reaction D-aspartate + O2 + H2O = oxaloacetate + H2O2 + NH4(+). Its function is as follows. Selectively catalyzes the oxidative deamination of acidic amino acids. Protects the organism from the toxicity of D-amino acids. Enables the organism to utilize D-amino acids as a source of nutrients. Enables the organism to utilize D-aspartate and D-asparagine as a source of nitrogen. May play a role in its interaction with the host. The sequence is that of D-aspartate oxidase from Cryptococcus neoformans var. grubii serotype A (strain H99 / ATCC 208821 / CBS 10515 / FGSC 9487) (Filobasidiella neoformans var. grubii).